The following is a 463-amino-acid chain: Argininosuccinate lyase (463 aa).

It belongs to the lyase 1 family. Argininosuccinate lyase subfamily.

It is found in the cytoplasm. The catalysed reaction is 2-(N(omega)-L-arginino)succinate = fumarate + L-arginine. Its pathway is amino-acid biosynthesis; L-arginine biosynthesis; L-arginine from L-ornithine and carbamoyl phosphate: step 3/3. The protein is Argininosuccinate lyase of Bradyrhizobium sp. (strain ORS 278).